Reading from the N-terminus, the 176-residue chain is ATP-dependent protease subunit HslV (176 aa).

Thr2 is a catalytic residue. Positions 157, 160, and 163 each coordinate Na(+).

The protein belongs to the peptidase T1B family. HslV subfamily. In terms of assembly, a double ring-shaped homohexamer of HslV is capped on each side by a ring-shaped HslU homohexamer. The assembly of the HslU/HslV complex is dependent on binding of ATP.

The protein resides in the cytoplasm. The enzyme catalyses ATP-dependent cleavage of peptide bonds with broad specificity.. Allosterically activated by HslU binding. Its function is as follows. Protease subunit of a proteasome-like degradation complex believed to be a general protein degrading machinery. This is ATP-dependent protease subunit HslV from Pseudomonas syringae pv. tomato (strain ATCC BAA-871 / DC3000).